A 174-amino-acid polypeptide reads, in one-letter code: MTRILGIDPGSQRTGIGIIDIDEGGRSRHVHHAPLMLLGEGDFSQRLKRLLQGLGELIEIYRPDEVAIEKVFMGKSAASALKLGHARGAAICAVVMRDLPVHEYAAKEIKLALVGKGGADKVQVQHMVGIMLNLNGKLQPDAADALAVAITHAHVRATAQRLGVNTQQAWSRKK.

Catalysis depends on residues Asp8, Glu69, and Asp141. Residues Asp8, Glu69, and Asp141 each coordinate Mg(2+).

Belongs to the RuvC family. As to quaternary structure, homodimer which binds Holliday junction (HJ) DNA. The HJ becomes 2-fold symmetrical on binding to RuvC with unstacked arms; it has a different conformation from HJ DNA in complex with RuvA. In the full resolvosome a probable DNA-RuvA(4)-RuvB(12)-RuvC(2) complex forms which resolves the HJ. Requires Mg(2+) as cofactor.

It is found in the cytoplasm. It catalyses the reaction Endonucleolytic cleavage at a junction such as a reciprocal single-stranded crossover between two homologous DNA duplexes (Holliday junction).. Functionally, the RuvA-RuvB-RuvC complex processes Holliday junction (HJ) DNA during genetic recombination and DNA repair. Endonuclease that resolves HJ intermediates. Cleaves cruciform DNA by making single-stranded nicks across the HJ at symmetrical positions within the homologous arms, yielding a 5'-phosphate and a 3'-hydroxyl group; requires a central core of homology in the junction. The consensus cleavage sequence is 5'-(A/T)TT(C/G)-3'. Cleavage occurs on the 3'-side of the TT dinucleotide at the point of strand exchange. HJ branch migration catalyzed by RuvA-RuvB allows RuvC to scan DNA until it finds its consensus sequence, where it cleaves and resolves the cruciform DNA. This chain is Crossover junction endodeoxyribonuclease RuvC, found in Xanthomonas axonopodis pv. citri (strain 306).